The primary structure comprises 119 residues: Iron-sulfur cluster insertion protein ErpA (119 aa).

3 residues coordinate iron-sulfur cluster: C47, C111, and C113.

Belongs to the HesB/IscA family. In terms of assembly, homodimer. Requires iron-sulfur cluster as cofactor.

Its function is as follows. Required for insertion of 4Fe-4S clusters for at least IspG. This chain is Iron-sulfur cluster insertion protein ErpA, found in Blochmanniella floridana.